Consider the following 522-residue polypeptide: Lysophospholipid acyltransferase LPCAT4 (522 aa).

2 consecutive transmembrane segments (helical) span residues 43 to 63 (ILGF…LFLM) and 92 to 112 (HLIY…WITI). Residues 130-135 (HSTFFD) carry the HXXXXD motif motif. N166 and N517 each carry an N-linked (GlcNAc...) asparagine glycan. Residues 496-522 (GRRKPPHIQQNGGCSGKNNPRNQSKMD) form a disordered region. Over residues 503 to 522 (IQQNGGCSGKNNPRNQSKMD) the composition is skewed to polar residues.

The protein belongs to the 1-acyl-sn-glycerol-3-phosphate acyltransferase family.

It localises to the endoplasmic reticulum membrane. The enzyme catalyses a 1-acyl-sn-glycero-3-phosphoethanolamine + an acyl-CoA = a 1,2-diacyl-sn-glycero-3-phosphoethanolamine + CoA. The catalysed reaction is a 1-O-(1Z-alkenyl)-sn-glycero-3-phosphoethanolamine + an acyl-CoA = a 1-O-(1Z-alkenyl)-2-acyl-sn-glycero-3-phosphoethanolamine + CoA. It carries out the reaction a 1-acyl-sn-glycero-3-phosphocholine + an acyl-CoA = a 1,2-diacyl-sn-glycero-3-phosphocholine + CoA. It catalyses the reaction a 1-O-alkyl-sn-glycero-3-phosphocholine + acetyl-CoA = a 1-O-alkyl-2-acetyl-sn-glycero-3-phosphocholine + CoA. The enzyme catalyses a 1-acyl-sn-glycero-3-phospho-L-serine + an acyl-CoA = a 1,2-diacyl-sn-glycero-3-phospho-L-serine + CoA. Its pathway is lipid metabolism; phospholipid metabolism. Functionally, displays acyl-CoA-dependent lysophospholipid acyltransferase activity with a subset of lysophospholipids as substrates. Prefers long chain acyl-CoAs (C16, C18) as acyl donors. In Xenopus tropicalis (Western clawed frog), this protein is Lysophospholipid acyltransferase LPCAT4 (lpcat4).